The following is a 904-amino-acid chain: Protein translocase subunit SecA (904 aa).

ATP is bound by residues Q89, 107 to 111 (GEGKT), and D496. A disordered region spans residues 870–904 (GGFQELSSGTPSPTVTVTTSSGGGTERKTSRRRKR). The span at 876–889 (SSGTPSPTVTVTTS) shows a compositional bias: low complexity.

Belongs to the SecA family. Monomer and homodimer. Part of the essential Sec protein translocation apparatus which comprises SecA, SecYEG and auxiliary proteins SecDF. Other proteins may also be involved.

Its subcellular location is the cell inner membrane. The protein localises to the cytoplasm. It catalyses the reaction ATP + H2O + cellular proteinSide 1 = ADP + phosphate + cellular proteinSide 2.. Functionally, part of the Sec protein translocase complex. Interacts with the SecYEG preprotein conducting channel. Has a central role in coupling the hydrolysis of ATP to the transfer of proteins into and across the cell membrane, serving as an ATP-driven molecular motor driving the stepwise translocation of polypeptide chains across the membrane. In Leptospira borgpetersenii serovar Hardjo-bovis (strain JB197), this protein is Protein translocase subunit SecA.